Here is a 97-residue protein sequence, read N- to C-terminus: YcgL domain-containing protein PSPPH_1548 (97 aa).

The region spanning 3 to 87 (RICSIYRSPK…AEDDYIEHLP (85 aa)) is the YcgL domain.

The polypeptide is YcgL domain-containing protein PSPPH_1548 (Pseudomonas savastanoi pv. phaseolicola (strain 1448A / Race 6) (Pseudomonas syringae pv. phaseolicola (strain 1448A / Race 6))).